A 379-amino-acid polypeptide reads, in one-letter code: uncharacterized protein (379 aa).

This sequence belongs to the glycosyltransferase 28 family.

This is an uncharacterized protein from Methanosarcina acetivorans (strain ATCC 35395 / DSM 2834 / JCM 12185 / C2A).